A 383-amino-acid polypeptide reads, in one-letter code: Vesicle-associated membrane protein-associated protein scs2 (383 aa).

Residues 1–123 form the MSP domain; that stretch reads MSVECSGELF…SIFDRKIRCV (123 aa). The Cytoplasmic portion of the chain corresponds to 1–362; that stretch reads MSVECSGELF…TGASLTESPG (362 aa). A compositionally biased stretch (polar residues) spans 127–146; it reads KQPPQSADKQVENTSTSNPP. Disordered regions lie at residues 127–160 and 233–359; these read KQPP…SSVG and ESAS…SLTE. Phosphoserine occurs at positions 236, 237, 259, 261, and 268. Positions 241–263 are enriched in basic and acidic residues; sequence DVARSKVQDIIDNEIPKPSESPR. A compositionally biased stretch (basic and acidic residues) spans 289-300; sequence FDTKKNDFDSKL. Over residues 347–359 the composition is skewed to polar residues; that stretch reads ADPSSSTGASLTE. The chain crosses the membrane as a helical; Anchor for type IV membrane protein span at residues 363–383; that stretch reads IPPNIVIILCLIFFLIGYLFF.

It belongs to the VAMP-associated protein (VAP) (TC 9.B.17) family. Interacts (via MSP domain) with duc1 (via FFAT-motif); the interaction is direct and serves to restrict the localization of duc1 to areas of cell membrane-endoplasmic reticulum contact sites, and away from the cell division site. Interacts with epr1.

It is found in the endoplasmic reticulum membrane. Its function is as follows. Vesicle-associated membrane protein-associated protein (VAP) implicated in maintaining the cortical endoplasmic reticulum (ER)-plasma membrane (PM) attachment. ER-PM contacts function to modulate the distribution of contractile ring components to ensure robust ring assembly. ER-PM contacts function also in controlling exocytosis and maintenance of cell polarity regulating cell shape. VAPs play an important role in regulating eisosome assembly. VAPs also contribute to ER-phagy by tethering atg8 to the ER membrane, but also by maintaining the ER-plasma membrane contact. Restricts the localization of duc1 away from the site of cell division. The sequence is that of Vesicle-associated membrane protein-associated protein scs2 (scs2) from Schizosaccharomyces pombe (strain 972 / ATCC 24843) (Fission yeast).